The primary structure comprises 146 residues: Hemoglobin subunit beta (146 aa).

A1 carries the N-acetylalanine modification. The region spanning 2 to 146 is the Globin domain; sequence SFDPHEKQLI…VAAALAAEYH (145 aa). H63 and H92 together coordinate heme b.

It belongs to the globin family. As to quaternary structure, heterotetramer of two alpha chains and two beta chains. As to expression, red blood cells.

In terms of biological role, involved in oxygen transport from the lung to the various peripheral tissues. In Crocodylus niloticus (Nile crocodile), this protein is Hemoglobin subunit beta (HBB).